A 797-amino-acid polypeptide reads, in one-letter code: Striatin-3 (797 aa).

An N-acetylmethionine modification is found at M1. Composition is skewed to gly residues over residues 1 to 12 (MDELAGGGGGGP) and 33 to 43 (GGNGAAGGGGP). The disordered stretch occupies residues 1 to 60 (MDELAGGGGGGPAMASPPRQQQGPGGNMSLSPGGNGAAGGGGPPATEGAGPAAGPELSRP). The span at 44–55 (PATEGAGPAAGP) shows a compositional bias: low complexity. Residues 71–79 (YIQHEWARF) are caveolin-binding. Residues 77–136 (ARFEMERAHWEVERAELQARIAFLQGERKGQENLKKDLVRRIKMLEYALKQERAKYHKLK) are a coiled coil. T150 is modified (phosphothreonine). A calmodulin-binding region spans residues 166–183 (QNSQLTWKQGRQLLRQYL). Residues S202, S214, S229, S257, and S335 each carry the phosphoserine modification. Positions 313 to 336 (DGEGAGEARSSGDGTEWDKDDLSP) are disordered. WD repeat units follow at residues 478–517 (SHFDGVRALAFHPVEPVLVTASEDHTLKLWNLQKTVPAKK), 531–570 (AHIGPVLSLAISSNGEQCFSGGTDATIQWWNMPSPNVDPY), 584–623 (AHTDAVWGLAYSGIKNQLLSCSADGTVRLWNPQEKLPCIC), 679–718 (QSSNHINRVVSHPTLPVTITAHEDRHIKFFDNKTGKMIHS), 721–760 (AHLDAVTSLAVDPNGIYLMSGSHDCSIRLWNLDSKTCVQE), and 767–796 (KLDESIYDVAFHPSKAYIASAGADALAKVF).

Belongs to the WD repeat striatin family. In terms of assembly, tetramerizes. Part of the core of STRIPAK complexes composed of PP2A catalytic and scaffolding subunits, the striatins (PP2A regulatory subunits), the striatin-associated proteins MOB4, STRIP1 and STRIP2, PDCD10 and members of the STE20 kinases, such as STK24 and STK26. The STRIPAK complex can be extended by adapter proteins such as SLMAP:SIKE1 or CTTNBP2NL. Interacts with CDC42BPB.

The protein resides in the cytoplasm. It localises to the membrane. Functionally, calmodulin-binding scaffolding protein which is the center of the striatin-interacting phosphatase and kinase (STRIPAK) complexes. STRIPAK complexes have critical roles in protein (de)phosphorylation and are regulators of multiple signaling pathways including Hippo, MAPK, nuclear receptor and cytoskeleton remodeling. Different types of STRIPAK complexes are involved in a variety of biological processes such as cell growth, differentiation, apoptosis, metabolism and immune regulation. This is Striatin-3 (STRN3) from Bos taurus (Bovine).